The sequence spans 122 residues: UPF0102 protein XOO3839 (122 aa).

It belongs to the UPF0102 family.

This is UPF0102 protein XOO3839 from Xanthomonas oryzae pv. oryzae (strain KACC10331 / KXO85).